Here is a 176-residue protein sequence, read N- to C-terminus: Large ribosomal subunit protein uL6 (176 aa).

This sequence belongs to the universal ribosomal protein uL6 family. As to quaternary structure, part of the 50S ribosomal subunit.

This protein binds to the 23S rRNA, and is important in its secondary structure. It is located near the subunit interface in the base of the L7/L12 stalk, and near the tRNA binding site of the peptidyltransferase center. The polypeptide is Large ribosomal subunit protein uL6 (Lactobacillus helveticus (strain DPC 4571)).